A 137-amino-acid polypeptide reads, in one-letter code: Small ribosomal subunit protein uS12 (137 aa).

The disordered stretch occupies residues 1–23 (MPTINQLVRKPRKSNATKSKSPA). Asp102 is subject to 3-methylthioaspartic acid.

This sequence belongs to the universal ribosomal protein uS12 family. As to quaternary structure, part of the 30S ribosomal subunit. Contacts proteins S8 and S17. May interact with IF1 in the 30S initiation complex.

With S4 and S5 plays an important role in translational accuracy. In terms of biological role, interacts with and stabilizes bases of the 16S rRNA that are involved in tRNA selection in the A site and with the mRNA backbone. Located at the interface of the 30S and 50S subunits, it traverses the body of the 30S subunit contacting proteins on the other side and probably holding the rRNA structure together. The combined cluster of proteins S8, S12 and S17 appears to hold together the shoulder and platform of the 30S subunit. This chain is Small ribosomal subunit protein uS12, found in Leuconostoc citreum (strain KM20).